The primary structure comprises 353 residues: MLVSDYHFDLPDSLIANYPMPDRTASRLLHLDGHSGEVVHRQFPDVLDLVQPGDLMVFNNTRVIPARVFGQKESGGKVEILVERVINVNEALAHVRASKSPKESSKLILGQDKGEHIEATMIGRSGALFHLVFDEPVLDVLMRAGHMPLPPYIERPDEDSDQERYQTVYNQKPGAVAAPTAGLHFDEALLEKLKAKGVETAFVTLHVGAGTFQPMKVENVKDHIMHAEYVEVEPSVVEQVKAAKARGGRVIAVGTTSVRSLESASQSGEIAPMQGDTSIFIYPGYEFKTVDALVTNFHLPESTLIMLISAFAGYDHVMAAYKKAVEQKYRFFSYGDAMFVTRNPQAKGPQGEE.

The protein belongs to the QueA family. As to quaternary structure, monomer.

It localises to the cytoplasm. The enzyme catalyses 7-aminomethyl-7-carbaguanosine(34) in tRNA + S-adenosyl-L-methionine = epoxyqueuosine(34) in tRNA + adenine + L-methionine + 2 H(+). It participates in tRNA modification; tRNA-queuosine biosynthesis. In terms of biological role, transfers and isomerizes the ribose moiety from AdoMet to the 7-aminomethyl group of 7-deazaguanine (preQ1-tRNA) to give epoxyqueuosine (oQ-tRNA). The chain is S-adenosylmethionine:tRNA ribosyltransferase-isomerase from Marinomonas sp. (strain MWYL1).